Consider the following 1159-residue polypeptide: Syntaxin-binding protein 5-like (1159 aa).

The interval 1–37 (MKKFRKVLDGLTTSSPVNPGGSPGCGSAAGTPSAAPT) is disordered. Residues 25 to 37 (CGSAAGTPSAAPT) are compositionally biased toward low complexity. 10 WD repeats span residues 67 to 108 (TALA…CHSQ), 115 to 154 (VLQM…SLKF), 159 to 195 (ITFC…GYVI), 214 to 248 (HLSD…DFRI), 254 to 286 (IHSV…TAKP), 307 to 350 (PILK…KAIT), 358 to 392 (IVDF…VVDL), 414 to 491 (TCTA…YKLK), 519 to 628 (QMIS…ELVV), and 642 to 703 (TCLD…STSG). Disordered stretches follow at residues 571 to 604 (SDTE…SVRD) and 690 to 770 (LTRS…KAQS). Polar residues-rich tracts occupy residues 699–713 (QSTS…NQVS) and 721–739 (SPTS…SQPC). WD repeat units lie at residues 808-865 (VTTL…TGTV), 874-946 (RFGF…QACL), 951-995 (ITES…LDVS), and 1009-1032 (CFTN…TYSQ). Residues 1094 to 1154 (GIEGMKAAAG…HELMLKCKDK (61 aa)) enclose the v-SNARE coiled-coil homology domain.

This sequence belongs to the WD repeat L(2)GL family.

The protein resides in the cytoplasm. The protein localises to the cell membrane. It localises to the membrane. May play a role in vesicle trafficking and exocytosis. The chain is Syntaxin-binding protein 5-like (stxbp5l) from Danio rerio (Zebrafish).